The primary structure comprises 249 residues: Urease accessory protein UreG (249 aa).

The span at 1 to 13 (MHLGHEEFQRTDG) shows a compositional bias: basic and acidic residues. Residues 1 to 34 (MHLGHEEFQRTDGRASTGPADAGPAGAGRAPRIG) are disordered. Positions 18–33 (GPADAGPAGAGRAPRI) are enriched in low complexity. 37-44 (GPVGSGKT) is a binding site for GTP. The disordered stretch occupies residues 229–249 (PRGGSYDASDASNASQPLNRM). Residues 238–249 (DASNASQPLNRM) show a composition bias toward polar residues.

It belongs to the SIMIBI class G3E GTPase family. UreG subfamily. Homodimer. UreD, UreF and UreG form a complex that acts as a GTP-hydrolysis-dependent molecular chaperone, activating the urease apoprotein by helping to assemble the nickel containing metallocenter of UreC. The UreE protein probably delivers the nickel.

It is found in the cytoplasm. Facilitates the functional incorporation of the urease nickel metallocenter. This process requires GTP hydrolysis, probably effectuated by UreG. This is Urease accessory protein UreG from Frankia casuarinae (strain DSM 45818 / CECT 9043 / HFP020203 / CcI3).